Reading from the N-terminus, the 131-residue chain is uncharacterized protein (131 aa).

Positions 1 to 19 (MRESLFIIFFQFVCHSSNS) are cleaved as a signal peptide. 2 helical membrane-spanning segments follow: residues 33–53 (PLLTWTAPSIDLALSILALFF) and 111–131 (VSFNGDLIIIFVGETIFFFLF).

It is found in the membrane. This is an uncharacterized protein from Saccharomyces cerevisiae (strain ATCC 204508 / S288c) (Baker's yeast).